A 140-amino-acid polypeptide reads, in one-letter code: Mite allergen Der p 21.0101 (140 aa).

The signal sequence occupies residues 1–19 (MKFIITLFAAIVMAAAVSG). Immunodominant conformational IgE-binding epitope stretches follow at residues 20-53 (FIVGDKKEDEWRMAFDRLMMEELETKIDQVEKGL) and 108-140 (YNYEFALESIKLLIKKLDELAKKVKAVNPDEYY).

It belongs to the mite group 5 allergen family. Monomer. Homodimer. As to expression, expressed in the epithelium, lumen and microvilli of the midgut, and in feces.

The protein localises to the cytoplasm. It localises to the endoplasmic reticulum. The protein resides in the vesicle. It is found in the secreted. The polypeptide is Mite allergen Der p 21.0101 (Dermatophagoides pteronyssinus (European house dust mite)).